A 488-amino-acid polypeptide reads, in one-letter code: Palmitoleoyl-protein carboxylesterase notum1 (488 aa).

Residues 1-20 (MAGALCVTLLLLLSTNTVSG) form the signal peptide. Residue Asn90 is glycosylated (N-linked (GlcNAc...) asparagine). Residues Ser226, Asp334, and His383 each act as charge relay system in the active site.

Belongs to the pectinacetylesterase family. Notum subfamily. In terms of tissue distribution, expressed in the egg and through cleavage to gastrulation stages. Enriched in the animal (prospective ectoderm) and dorsal regions in early gastrula. Shows a dynamic expression during embryogenesis, in particular during neural induction and antero-posterior (AP) patterning.

The protein resides in the secreted. It carries out the reaction [Wnt protein]-O-(9Z)-hexadecenoyl-L-serine + H2O = [Wnt protein]-L-serine + (9Z)-hexadecenoate + H(+). Its function is as follows. Carboxylesterase that acts as a key negative regulator of the Wnt signaling pathway by specifically mediating depalmitoleoylation of WNT proteins. Serine palmitoleoylation of WNT proteins is required for efficient binding to frizzled receptors. Functions in the prospective ectoderm and is required for neural induction. The polypeptide is Palmitoleoyl-protein carboxylesterase notum1 (Xenopus laevis (African clawed frog)).